Reading from the N-terminus, the 224-residue chain is Octanoyltransferase (224 aa).

The BPL/LPL catalytic domain maps to 33–213 (GTTAETMLLL…ALQAEFGREA (181 aa)). The segment at 51–71 (GKRTTDDERPTDGTPVVDVDR) is disordered. Residues 71-78 (RGGKITWH), 143-145 (AIG), and 156-158 (GFA) contribute to the substrate site. Cys-174 acts as the Acyl-thioester intermediate in catalysis.

It belongs to the LipB family.

It is found in the cytoplasm. The catalysed reaction is octanoyl-[ACP] + L-lysyl-[protein] = N(6)-octanoyl-L-lysyl-[protein] + holo-[ACP] + H(+). It functions in the pathway protein modification; protein lipoylation via endogenous pathway; protein N(6)-(lipoyl)lysine from octanoyl-[acyl-carrier-protein]: step 1/2. Its function is as follows. Catalyzes the transfer of endogenously produced octanoic acid from octanoyl-acyl-carrier-protein onto the lipoyl domains of lipoate-dependent enzymes. Lipoyl-ACP can also act as a substrate although octanoyl-ACP is likely to be the physiological substrate. This is Octanoyltransferase from Leifsonia xyli subsp. xyli (strain CTCB07).